The chain runs to 393 residues: Putative competence-damage inducible protein (393 aa).

This sequence belongs to the CinA family.

In Streptococcus suis (strain 05ZYH33), this protein is Putative competence-damage inducible protein.